Here is a 678-residue protein sequence, read N- to C-terminus: MSNEREMQNKKDQQLESFRVEDEGKKLTTNQGLKVSEDEFSLKAGERGPTLMEDFHFREKMTHFDHERIPERIVHARGFAAHGEFQVYDSMKEFTKAKFLQDPSVKTPVFVRFSTVAGSKGSAETVRDARGFATKFYTEEGNYDLVGNNIPVFFIQDAIKFPDLVHALKPEPHNEIPQAQSAHDTFWDFIANNQESAHMVMWAMSDRSIPRSFRMMEGFGVHTFRFVNEEGKAHFVKFHWKPVLGIHSLVWDEAQKIAGKDPDFHRRDLWESIENGDYPEYELGVQLISEEDEFNFDFDVLDPTKIWPEEEVPVKIIGKMTLNRNVDNVFAETEQVAFHPGHVVPGIDFTNDPLLQGRLFSYTDTQLIRLGGPNFHELPINRPVCPFHNNQRDGYGRQTINKGQVSYHKNSLAANTPQPASEEEGGYAHYQEKVEGRKVRKRSESFKDHFSQAKLFWNSMSEVEKNHIIEAFSFELGKVQSKSVQQQVVEMFAHVTSDLAKPVAEAIGANLPQSEGSSVTKSSLALSQENTIKKPDTRKVGVIIDNGFNGDEVKQVLNELQSKGIQAEFISDKLGIKKCAGGSEIEIDHTFLTGESVLFDALYVVGGKEVDPSFKDDAVYFIKEAYAHFKPIGATHVGIKWLEEQEIVEKEGVVTGTDMNIFSQNLTGAVMEHRHWNR.

Residues 1–26 (MSNEREMQNKKDQQLESFRVEDEGKK) are compositionally biased toward basic and acidic residues. The tract at residues 1 to 32 (MSNEREMQNKKDQQLESFRVEDEGKKLTTNQG) is disordered. Catalysis depends on residues His-75 and Asn-148. Heme is bound at residue Tyr-362.

It belongs to the catalase family. HPII subfamily. Heme serves as cofactor.

It is found in the cytoplasm. The catalysed reaction is 2 H2O2 = O2 + 2 H2O. Functionally, decomposes hydrogen peroxide into water and oxygen; serves to protect cells from the toxic effects of hydrogen peroxide. This chain is Catalase (katE), found in Alkalihalophilus pseudofirmus (strain ATCC BAA-2126 / JCM 17055 / OF4) (Bacillus pseudofirmus).